The sequence spans 76 residues: U1-cyrtautoxin-As1b (76 aa).

Cystine bridges form between cysteine 23/cysteine 37, cysteine 30/cysteine 51, cysteine 36/cysteine 66, and cysteine 69/cysteine 76.

The protein belongs to the neurotoxin 21 family. Expressed by the venom gland.

Its subcellular location is the secreted. In terms of biological role, neurotoxin with probable ion channel impairing activity. Is both paralytic and lethal, when injected into lepidopteran larvae. In Apomastus schlingeri (Trap-door spider), this protein is U1-cyrtautoxin-As1b.